A 156-amino-acid polypeptide reads, in one-letter code: Large ribosomal subunit protein bL17 (156 aa).

Positions 127 to 156 (RATRAAASKKAAEEKAAEAAEEKDEAAEEK) are disordered. Residues 136–146 (KAAEEKAAEAA) show a composition bias toward basic and acidic residues. Residues 147–156 (EEKDEAAEEK) show a composition bias toward acidic residues.

This sequence belongs to the bacterial ribosomal protein bL17 family. As to quaternary structure, part of the 50S ribosomal subunit. Contacts protein L32.

The protein is Large ribosomal subunit protein bL17 of Corynebacterium urealyticum (strain ATCC 43042 / DSM 7109).